The primary structure comprises 204 residues: 3-isopropylmalate dehydratase small subunit (204 aa).

It belongs to the LeuD family. LeuD type 1 subfamily. In terms of assembly, heterodimer of LeuC and LeuD.

It carries out the reaction (2R,3S)-3-isopropylmalate = (2S)-2-isopropylmalate. Its pathway is amino-acid biosynthesis; L-leucine biosynthesis; L-leucine from 3-methyl-2-oxobutanoate: step 2/4. In terms of biological role, catalyzes the isomerization between 2-isopropylmalate and 3-isopropylmalate, via the formation of 2-isopropylmaleate. The sequence is that of 3-isopropylmalate dehydratase small subunit from Ruthia magnifica subsp. Calyptogena magnifica.